A 425-amino-acid chain; its full sequence is UDP-N-acetylglucosamine 1-carboxyvinyltransferase (425 aa).

K22 to N23 is a phosphoenolpyruvate binding site. R93 provides a ligand contact to UDP-N-acetyl-alpha-D-glucosamine. The active-site Proton donor is C117. C117 bears the 2-(S-cysteinyl)pyruvic acid O-phosphothioketal mark. UDP-N-acetyl-alpha-D-glucosamine is bound by residues R122 to L126, D307, and V329.

It belongs to the EPSP synthase family. MurA subfamily.

The protein localises to the cytoplasm. It carries out the reaction phosphoenolpyruvate + UDP-N-acetyl-alpha-D-glucosamine = UDP-N-acetyl-3-O-(1-carboxyvinyl)-alpha-D-glucosamine + phosphate. It functions in the pathway cell wall biogenesis; peptidoglycan biosynthesis. Cell wall formation. Adds enolpyruvyl to UDP-N-acetylglucosamine. In Prosthecochloris aestuarii (strain DSM 271 / SK 413), this protein is UDP-N-acetylglucosamine 1-carboxyvinyltransferase.